The chain runs to 239 residues: Orotidine 5'-phosphate decarboxylase (239 aa).

Substrate-binding positions include D11, K33, D60 to T69, T117, R178, Q187, G207, and R208. K62 serves as the catalytic Proton donor.

It belongs to the OMP decarboxylase family. Type 1 subfamily. Homodimer.

The enzyme catalyses orotidine 5'-phosphate + H(+) = UMP + CO2. The protein operates within pyrimidine metabolism; UMP biosynthesis via de novo pathway; UMP from orotate: step 2/2. Functionally, catalyzes the decarboxylation of orotidine 5'-monophosphate (OMP) to uridine 5'-monophosphate (UMP). This is Orotidine 5'-phosphate decarboxylase from Nitrosospira multiformis (strain ATCC 25196 / NCIMB 11849 / C 71).